A 553-amino-acid polypeptide reads, in one-letter code: Interleukin-20 receptor subunit alpha (553 aa).

The first 29 residues, 1–29, serve as a signal peptide directing secretion; it reads MRAPGRPALRPLPLPPLLLLLLAAPWGRA. The Extracellular portion of the chain corresponds to 30-250; it reads VPCVSGGLPK…KDQSSEFKAK (221 aa). 2 Fibronectin type-III domains span residues 37–135 and 136–242; these read LPKP…FLET and QIGP…TLKD. Residues Asn-42, Asn-83, Asn-91, Asn-182, Asn-191, and Asn-200 are each glycosylated (N-linked (GlcNAc...) asparagine). Cys-87 and Cys-95 form a disulfide bridge. A disulfide bond links Cys-215 and Cys-236. Residues 251 to 271 traverse the membrane as a helical segment; that stretch reads IIFWYVLPVSITVFLFSVMGY. The Cytoplasmic portion of the chain corresponds to 272 to 553; it reads SIYRYIHVGK…EWGLYVQMEN (282 aa). 2 disordered regions span residues 333–353 and 462–515; these read SSDVSSLNDPQPSGNLRPPQE and QEHT…LGEE. Over residues 334–346 the composition is skewed to polar residues; the sequence is SDVSSLNDPQPSG. Residues 499–513 show a composition bias toward acidic residues; the sequence is QDSEGCEPSEGDGLG.

This sequence belongs to the type II cytokine receptor family. In terms of assembly, heterodimer with IL20RB and heterodimer with IL10RB. In terms of tissue distribution, widely expressed with highest levels in skin and testis and high levels in brain. Highly expressed in psoriatic skin.

It is found in the membrane. Its function is as follows. The IL20RA/IL20RB dimer is a receptor for IL19, IL20 and IL24. The IL20RA/IL10RB dimer is a receptor for IL26. This chain is Interleukin-20 receptor subunit alpha (IL20RA), found in Homo sapiens (Human).